Reading from the N-terminus, the 283-residue chain is Pantothenate synthetase (283 aa).

30–37 (MGNLHDGH) lines the ATP pocket. Residue histidine 37 is the Proton donor of the active site. Position 61 (glutamine 61) interacts with (R)-pantoate. Residue glutamine 61 coordinates beta-alanine. 149–152 (GEKD) contacts ATP. Residue glutamine 155 participates in (R)-pantoate binding. An ATP-binding site is contributed by 186 to 189 (LSSR).

It belongs to the pantothenate synthetase family. Homodimer.

It localises to the cytoplasm. It carries out the reaction (R)-pantoate + beta-alanine + ATP = (R)-pantothenate + AMP + diphosphate + H(+). It participates in cofactor biosynthesis; (R)-pantothenate biosynthesis; (R)-pantothenate from (R)-pantoate and beta-alanine: step 1/1. Catalyzes the condensation of pantoate with beta-alanine in an ATP-dependent reaction via a pantoyl-adenylate intermediate. The chain is Pantothenate synthetase from Escherichia coli O45:K1 (strain S88 / ExPEC).